A 529-amino-acid chain; its full sequence is Peptide chain release factor 3 (529 aa).

In terms of domain architecture, tr-type G spans 11 to 280 (ARRRTFAIIS…GLVEWAPSPM (270 aa)). Residues 20–27 (SHPDAGKT), 88–92 (DTPGH), and 142–145 (NKLD) each bind GTP.

The protein belongs to the TRAFAC class translation factor GTPase superfamily. Classic translation factor GTPase family. PrfC subfamily.

Its subcellular location is the cytoplasm. Functionally, increases the formation of ribosomal termination complexes and stimulates activities of RF-1 and RF-2. It binds guanine nucleotides and has strong preference for UGA stop codons. It may interact directly with the ribosome. The stimulation of RF-1 and RF-2 is significantly reduced by GTP and GDP, but not by GMP. In Erwinia tasmaniensis (strain DSM 17950 / CFBP 7177 / CIP 109463 / NCPPB 4357 / Et1/99), this protein is Peptide chain release factor 3.